We begin with the raw amino-acid sequence, 66 residues long: Prokaryotic ubiquitin-like protein UBact (66 aa).

The segment at 1–66 is disordered; it reads MNMRYTLMPE…AERYRQRTGE (66 aa). A compositionally biased stretch (basic and acidic residues) spans 30 to 66; that stretch reads GGPRRPETGSPDKDNLLKRMRKVDPKQAERYRQRTGE. An Isoglutamyl lysine isopeptide (Glu-Lys) (interchain with K-? in acceptor proteins) cross-link involves residue Glu66.

This sequence belongs to the ubiquitin-like protein UBact family.

Its function is as follows. May function as a protein modifier covalently attached to lysine residues of substrate proteins. This may serve to target the modified proteins for degradation by proteasomes. The protein is Prokaryotic ubiquitin-like protein UBact of Nitrospira moscoviensis.